The primary structure comprises 186 residues: Peptide deformylase (186 aa).

Residues C113 and H156 each contribute to the Fe cation site. E157 is a catalytic residue. H160 is a binding site for Fe cation.

The protein belongs to the polypeptide deformylase family. The cofactor is Fe(2+).

It carries out the reaction N-terminal N-formyl-L-methionyl-[peptide] + H2O = N-terminal L-methionyl-[peptide] + formate. Removes the formyl group from the N-terminal Met of newly synthesized proteins. Requires at least a dipeptide for an efficient rate of reaction. N-terminal L-methionine is a prerequisite for activity but the enzyme has broad specificity at other positions. The protein is Peptide deformylase of Levilactobacillus brevis (strain ATCC 367 / BCRC 12310 / CIP 105137 / JCM 1170 / LMG 11437 / NCIMB 947 / NCTC 947) (Lactobacillus brevis).